Here is a 309-residue protein sequence, read N- to C-terminus: Beta-lactamase (309 aa).

The N-terminal stretch at 1-28 (MMILKNKRMLKIGICVGILGLSITSLEA) is a signal peptide. Residue Ser92 is the Acyl-ester intermediate of the active site. The Proton acceptor role is filled by Glu188. 254–256 (KSG) is a substrate binding site.

Belongs to the class-A beta-lactamase family.

It catalyses the reaction a beta-lactam + H2O = a substituted beta-amino acid. Functionally, this protein is a beta-lactamase with a substrate specificity for penicillins. The chain is Beta-lactamase (bla) from Bacillus thuringiensis.